Reading from the N-terminus, the 386-residue chain is MGSKGDNVAVCNMKLERLLSMKGGKGQDSYANNSQAQAMHARSMLHLLEETLENVHLNSSASPPPFTAVDLGCSSGANTVHIIDFIVKHISKRFDAAGIDPPEFTAFFSDLPSNDFNTLFQLLPPLVSNTCMEECLAADGNRSYFVAGVPGSFYRRLFPARTIDFFHSAFSLHWLSQVPESVTDRRSAAYNRGRVFIHGAGEKTTTAYKRQFQADLAEFLRARAAEVKRGGAMFLVCLGRTSVDPTDQGGAGLLFGTHFQDAWDDLVREGLVAAEKRDGFNIPVYAPSLQDFKEVVDANGSFAIDKLVVYKGGSPLVVNEPDDASEVGRAFASSCRSVAGVLVEAHIGEELSNKLFSRVESRATSHAKDVLVNLQFFHIVASLSFT.

Y30 lines the S-adenosyl-L-methionine pocket. Substrate contacts are provided by residues Y30 and 33 to 37 (NSQAQ). S-adenosyl-L-methionine-binding positions include G72, 72 to 73 (GC), N78, 108 to 111 (FSDL), D110, 152 to 154 (SFY), and 169 to 171 (AFS). 170–174 (FSLHW) provides a ligand contact to substrate. Mg(2+) contacts are provided by N191, V195, R277, D278, F280, and N281. S334 provides a ligand contact to substrate.

The protein belongs to the methyltransferase superfamily. SABATH family. Homodimer. It depends on Mg(2+) as a cofactor. As to expression, expressed in seedling roots and leaves. Expressed in the stigma, funiculus, and vascular bundles in sepals, petals and stamens.

The catalysed reaction is (indol-3-yl)acetate + S-adenosyl-L-methionine = methyl (indol-3-yl)acetate + S-adenosyl-L-homocysteine. Functionally, catalyzes the methylation of the free carboxyl end of the plant hormone indole-3-acetic acid (IAA). Converts IAA to IAA methyl ester (MeIAA). Regulates IAA activities by IAA methylation. Methylation of IAA plays an important role in regulating plant development and auxin homeostasis. Required for correct leaf pattern formation. MeIAA seems to be an inactive form of IAA. This Arabidopsis thaliana (Mouse-ear cress) protein is Indole-3-acetate O-methyltransferase 1 (IAMT1).